Here is a 314-residue protein sequence, read N- to C-terminus: MRAFTYKDGKLYEDKELTIPVHCSNPTYEILKHVKIPSHLTDVIVYEQTYEQSLSRLIFVGLDSKGRRQYFYGKMHVQRRNSARDTIFIKVHRVIDKIHKFIDDTIEHKNDVLFQLGVFMLMETSFFIRMGKVKYLKENDTVGLLTLKNKNIVRENRKILIHFVGKDKIIHNFTVHSSNRLYKPLLRLIGRKEPDSFLFHKLSEKKVYKAVQQFGIRLKDLRTYGVNYTFLYNFWTNVKSLNPIPPIKKMISTSIKQTADIVGHTPSISKRAYIANTVLEYLTHDSELINTIRDISFDEFIRLITDYITNTQTV.

The 242-residue stretch at 73–314 folds into the Topo IB-type catalytic domain; it reads GKMHVQRRNS…TDYITNTQTV (242 aa). Tyr273 functions as the O-(3'-phospho-DNA)-tyrosine intermediate in the catalytic mechanism.

It belongs to the type IB topoisomerase family.

It catalyses the reaction ATP-independent breakage of single-stranded DNA, followed by passage and rejoining.. Its function is as follows. Releases the supercoiling and torsional tension of DNA introduced during the DNA replication and transcription by transiently cleaving and rejoining one strand of the DNA duplex. Introduces a single-strand break via transesterification at a target site in duplex DNA. The scissile phosphodiester is attacked by the catalytic tyrosine of the enzyme, resulting in the formation of a DNA-(3'-phosphotyrosyl)-enzyme intermediate and the expulsion of a 5'-OH DNA strand. The free DNA strand then undergoes passage around the unbroken strand thus removing DNA supercoils. Finally, in the religation step, the DNA 5'-OH attacks the covalent intermediate to expel the active-site tyrosine and restore the DNA phosphodiester backbone. The polypeptide is DNA topoisomerase 1 (TOP1) (Oryctolagus cuniculus (Rabbit)).